The chain runs to 375 residues: Trichodiene synthase (375 aa).

The protein belongs to the trichodiene synthase family.

It catalyses the reaction (2E,6E)-farnesyl diphosphate = trichodiene + diphosphate. It functions in the pathway sesquiterpene biosynthesis; trichothecene biosynthesis. TS is a member of the terpene cyclase group of enzymes. It catalyzes the isomerization and cyclization of farnesyl pyro-phosphate to form trichodiene, the first cyclic intermediate in the biosynthetic pathway for trichothecenes. It serves to branch trichothecene biosynthesis from the isoprenoid pathway. In Gibberella zeae (strain ATCC MYA-4620 / CBS 123657 / FGSC 9075 / NRRL 31084 / PH-1) (Wheat head blight fungus), this protein is Trichodiene synthase (TRI5).